A 178-amino-acid chain; its full sequence is Cytidylate kinase (178 aa).

7–15 contacts ATP; sequence GLPGTGTTT.

The protein belongs to the cytidylate kinase family. Type 2 subfamily.

It is found in the cytoplasm. It carries out the reaction CMP + ATP = CDP + ADP. The enzyme catalyses dCMP + ATP = dCDP + ADP. This Methanocaldococcus jannaschii (strain ATCC 43067 / DSM 2661 / JAL-1 / JCM 10045 / NBRC 100440) (Methanococcus jannaschii) protein is Cytidylate kinase (cmk).